We begin with the raw amino-acid sequence, 353 residues long: Chemerin-like receptor 2 (353 aa).

Residues 1 to 41 (MEVSKEMLFEELDNYSYALDYYSQESDPEEKVYLGLVHWIS) lie on the Extracellular side of the membrane. Residue Asn14 is glycosylated (N-linked (GlcNAc...) asparagine). The helical transmembrane segment at 42 to 62 (LFLYALAFVLGIPGNAIVIWL) threads the bilayer. Topologically, residues 63–73 (MGFKWKKTVTT) are cytoplasmic. A helical membrane pass occupies residues 74 to 94 (LWFLNLAIADFIFVLFLPLYI). Over 95–112 (SYVALSFHWPFGLWLCKV) the chain is Extracellular. A disulfide bridge connects residues Cys110 and Cys187. The chain crosses the membrane as a helical span at residues 113–133 (NSFIAQLNMFSSVFFLTVISL). Topologically, residues 134-154 (DRYIHLLHPGLSHRHRTLKSS) are cytoplasmic. A helical membrane pass occupies residues 155–175 (LVVVILVWLLASLLGGPTLYF). Topologically, residues 176–210 (RDTMEVNNHIICYNNFQEHELTLMRHHVLTWVKFL) are extracellular. Residues 211–231 (FGYLFPLLTMSSCYLCLIFKM) traverse the membrane as a helical segment. The Cytoplasmic portion of the chain corresponds to 232–247 (KKRNILISRKHLWMIL). A helical membrane pass occupies residues 248–268 (SVVIAFLVCWTPYHLFSIWEL). Residues 269-286 (SIHHNSSFQNVLQGGIPL) lie on the Extracellular side of the membrane. Residues 287 to 307 (STGLAFLNSCLNPILYVLISK) form a helical membrane-spanning segment. At 308-353 (TFQARFRASVAEVLKRSLWEASCSGTVSEQLRSAETKSLSLLETAQ) the chain is on the cytoplasmic side.

Belongs to the chemokine-like receptor (CMKLR) family. High expressed in white adipose tissue and skeletal muscle. Expressed in hippocampus and cortex.

It is found in the cell membrane. Receptor for chemoattractant adipokine chemerin/RARRES2 suggesting a role for this receptor in the regulation of inflammation and energy homesotasis. Signals mainly via beta-arrestin pathway. Binding of RARRES2 activates weakly G proteins, calcium mobilization and MAPK1/MAPK3 (ERK1/2) phosphorylation too. Acts also as a receptor for TAFA1, mediates its effects on neuronal stem-cell proliferation and differentiation via the activation of ROCK/ERK and ROCK/STAT3 signaling pathway. This Mus musculus (Mouse) protein is Chemerin-like receptor 2 (Cmklr2).